Here is a 196-residue protein sequence, read N- to C-terminus: ATP synthase subunit b 2 (196 aa).

Residues 1–18 show a composition bias toward low complexity; the sequence is MVVAQAGAPAHPPAAHGA. The interval 1–33 is disordered; that stretch reads MVVAQAGAPAHPPAAHGAEAGHGEAAGGEHGGF. A helical transmembrane segment spans residues 41–60; it reads FASQLIWLIVSFGALYFLMS.

This sequence belongs to the ATPase B chain family. F-type ATPases have 2 components, F(1) - the catalytic core - and F(0) - the membrane proton channel. F(1) has five subunits: alpha(3), beta(3), gamma(1), delta(1), epsilon(1). F(0) has three main subunits: a(1), b(2) and c(10-14). The alpha and beta chains form an alternating ring which encloses part of the gamma chain. F(1) is attached to F(0) by a central stalk formed by the gamma and epsilon chains, while a peripheral stalk is formed by the delta and b chains.

It is found in the cell inner membrane. F(1)F(0) ATP synthase produces ATP from ADP in the presence of a proton or sodium gradient. F-type ATPases consist of two structural domains, F(1) containing the extramembraneous catalytic core and F(0) containing the membrane proton channel, linked together by a central stalk and a peripheral stalk. During catalysis, ATP synthesis in the catalytic domain of F(1) is coupled via a rotary mechanism of the central stalk subunits to proton translocation. In terms of biological role, component of the F(0) channel, it forms part of the peripheral stalk, linking F(1) to F(0). The b'-subunit is a diverged and duplicated form of b found in plants and photosynthetic bacteria. In Azorhizobium caulinodans (strain ATCC 43989 / DSM 5975 / JCM 20966 / LMG 6465 / NBRC 14845 / NCIMB 13405 / ORS 571), this protein is ATP synthase subunit b 2 (atpF2).